We begin with the raw amino-acid sequence, 129 residues long: Phosphoribosyl-AMP cyclohydrolase (129 aa).

A Mg(2+)-binding site is contributed by aspartate 85. Cysteine 86 serves as a coordination point for Zn(2+). Aspartate 87 and aspartate 89 together coordinate Mg(2+). Zn(2+) is bound by residues cysteine 102 and cysteine 109.

It belongs to the PRA-CH family. Homodimer. It depends on Mg(2+) as a cofactor. Zn(2+) serves as cofactor.

The protein resides in the cytoplasm. It catalyses the reaction 1-(5-phospho-beta-D-ribosyl)-5'-AMP + H2O = 1-(5-phospho-beta-D-ribosyl)-5-[(5-phospho-beta-D-ribosylamino)methylideneamino]imidazole-4-carboxamide. Its pathway is amino-acid biosynthesis; L-histidine biosynthesis; L-histidine from 5-phospho-alpha-D-ribose 1-diphosphate: step 3/9. Functionally, catalyzes the hydrolysis of the adenine ring of phosphoribosyl-AMP. This is Phosphoribosyl-AMP cyclohydrolase from Methanococcus maripaludis (strain C5 / ATCC BAA-1333).